A 159-amino-acid polypeptide reads, in one-letter code: Ribosomal RNA large subunit methyltransferase H (159 aa).

Residues leucine 76, glycine 107, and 126–131 (LSKLTM) contribute to the S-adenosyl-L-methionine site.

It belongs to the RNA methyltransferase RlmH family. In terms of assembly, homodimer.

It is found in the cytoplasm. It carries out the reaction pseudouridine(1915) in 23S rRNA + S-adenosyl-L-methionine = N(3)-methylpseudouridine(1915) in 23S rRNA + S-adenosyl-L-homocysteine + H(+). Specifically methylates the pseudouridine at position 1915 (m3Psi1915) in 23S rRNA. The sequence is that of Ribosomal RNA large subunit methyltransferase H from Acinetobacter baylyi (strain ATCC 33305 / BD413 / ADP1).